A 160-amino-acid chain; its full sequence is Protein-export protein SecB (160 aa).

This sequence belongs to the SecB family. Homotetramer, a dimer of dimers. One homotetramer interacts with 1 SecA dimer.

It is found in the cytoplasm. One of the proteins required for the normal export of preproteins out of the cell cytoplasm. It is a molecular chaperone that binds to a subset of precursor proteins, maintaining them in a translocation-competent state. It also specifically binds to its receptor SecA. In Orientia tsutsugamushi (strain Boryong) (Rickettsia tsutsugamushi), this protein is Protein-export protein SecB.